The chain runs to 403 residues: Phosphopentomutase (403 aa).

Residues aspartate 13, aspartate 298, histidine 303, aspartate 339, histidine 340, and histidine 351 each coordinate Mn(2+).

This sequence belongs to the phosphopentomutase family. Mn(2+) serves as cofactor.

The protein localises to the cytoplasm. It catalyses the reaction 2-deoxy-alpha-D-ribose 1-phosphate = 2-deoxy-D-ribose 5-phosphate. The enzyme catalyses alpha-D-ribose 1-phosphate = D-ribose 5-phosphate. Its pathway is carbohydrate degradation; 2-deoxy-D-ribose 1-phosphate degradation; D-glyceraldehyde 3-phosphate and acetaldehyde from 2-deoxy-alpha-D-ribose 1-phosphate: step 1/2. Isomerase that catalyzes the conversion of deoxy-ribose 1-phosphate (dRib-1-P) and ribose 1-phosphate (Rib-1-P) to deoxy-ribose 5-phosphate (dRib-5-P) and ribose 5-phosphate (Rib-5-P), respectively. This chain is Phosphopentomutase, found in Streptococcus equi subsp. zooepidemicus (strain H70).